Consider the following 50-residue polypeptide: Insulin (50 aa).

Intrachain disulfides connect C7–C36, C19–C49, and C35–C40.

This sequence belongs to the insulin family. As to quaternary structure, heterodimer of a B chain and an A chain linked by two disulfide bonds.

Its subcellular location is the secreted. Insulin decreases blood glucose concentration. It increases cell permeability to monosaccharides, amino acids and fatty acids. It accelerates glycolysis, the pentose phosphate cycle, and glycogen synthesis in liver. This chain is Insulin (ins), found in Oncorhynchus gorbuscha (Pink salmon).